A 340-amino-acid polypeptide reads, in one-letter code: Glycerol-3-phosphate dehydrogenase [NAD(P)+] (340 aa).

Serine 14, phenylalanine 15, arginine 35, and lysine 108 together coordinate NADPH. The sn-glycerol 3-phosphate site is built by lysine 108 and glycine 136. Alanine 140 is a binding site for NADPH. The sn-glycerol 3-phosphate site is built by lysine 191, aspartate 244, serine 254, arginine 255, and asparagine 256. The active-site Proton acceptor is the lysine 191. Arginine 255 serves as a coordination point for NADPH. Residue glutamate 281 participates in NADPH binding.

It belongs to the NAD-dependent glycerol-3-phosphate dehydrogenase family.

The protein resides in the cytoplasm. The catalysed reaction is sn-glycerol 3-phosphate + NAD(+) = dihydroxyacetone phosphate + NADH + H(+). It carries out the reaction sn-glycerol 3-phosphate + NADP(+) = dihydroxyacetone phosphate + NADPH + H(+). The protein operates within membrane lipid metabolism; glycerophospholipid metabolism. Functionally, catalyzes the reduction of the glycolytic intermediate dihydroxyacetone phosphate (DHAP) to sn-glycerol 3-phosphate (G3P), the key precursor for phospholipid synthesis. The polypeptide is Glycerol-3-phosphate dehydrogenase [NAD(P)+] (Pseudomonas aeruginosa (strain ATCC 15692 / DSM 22644 / CIP 104116 / JCM 14847 / LMG 12228 / 1C / PRS 101 / PAO1)).